Reading from the N-terminus, the 236-residue chain is DNA repair protein RecO (236 aa).

Belongs to the RecO family.

Functionally, involved in DNA repair and RecF pathway recombination. This chain is DNA repair protein RecO, found in Cellvibrio japonicus (strain Ueda107) (Pseudomonas fluorescens subsp. cellulosa).